We begin with the raw amino-acid sequence, 510 residues long: ATP synthase subunit alpha (510 aa).

169–176 lines the ATP pocket; the sequence is GDRQTGKT.

The protein belongs to the ATPase alpha/beta chains family. As to quaternary structure, F-type ATPases have 2 components, CF(1) - the catalytic core - and CF(0) - the membrane proton channel. CF(1) has five subunits: alpha(3), beta(3), gamma(1), delta(1), epsilon(1). CF(0) has three main subunits: a(1), b(2) and c(9-12). The alpha and beta chains form an alternating ring which encloses part of the gamma chain. CF(1) is attached to CF(0) by a central stalk formed by the gamma and epsilon chains, while a peripheral stalk is formed by the delta and b chains.

It is found in the cell inner membrane. The enzyme catalyses ATP + H2O + 4 H(+)(in) = ADP + phosphate + 5 H(+)(out). In terms of biological role, produces ATP from ADP in the presence of a proton gradient across the membrane. The alpha chain is a regulatory subunit. The protein is ATP synthase subunit alpha of Rickettsia rickettsii (strain Iowa).